A 617-amino-acid chain; its full sequence is Glutamyl-tRNA(Gln) amidotransferase subunit E (617 aa).

This sequence belongs to the GatB/GatE family. GatE subfamily. As to quaternary structure, heterodimer of GatD and GatE.

It catalyses the reaction L-glutamyl-tRNA(Gln) + L-glutamine + ATP + H2O = L-glutaminyl-tRNA(Gln) + L-glutamate + ADP + phosphate + H(+). In terms of biological role, allows the formation of correctly charged Gln-tRNA(Gln) through the transamidation of misacylated Glu-tRNA(Gln) in organisms which lack glutaminyl-tRNA synthetase. The reaction takes place in the presence of glutamine and ATP through an activated gamma-phospho-Glu-tRNA(Gln). The GatDE system is specific for glutamate and does not act on aspartate. This Natronomonas pharaonis (strain ATCC 35678 / DSM 2160 / CIP 103997 / JCM 8858 / NBRC 14720 / NCIMB 2260 / Gabara) (Halobacterium pharaonis) protein is Glutamyl-tRNA(Gln) amidotransferase subunit E.